Reading from the N-terminus, the 286-residue chain is 4-hydroxybenzoate octaprenyltransferase (286 aa).

Transmembrane regions (helical) follow at residues 21-40 (GTLLLLWPCLMALVLAAGGM), 96-116 (LFVILGLAAFGLVLLLNGLVV), 142-162 (FLGVVWSWSIPMAYAAQTGEV), 167-187 (WWLFAANWFWTVAYDTMYAMV), 210-230 (QIIGLFQLAALLCFIAAGWSA), 235-255 (LYGLGLLTFVGFSTYQQMLIF), and 266-286 (FLNNNWAGLALFVGLGADYLF).

The protein belongs to the UbiA prenyltransferase family. Mg(2+) is required as a cofactor.

The protein localises to the cell inner membrane. The catalysed reaction is all-trans-octaprenyl diphosphate + 4-hydroxybenzoate = 4-hydroxy-3-(all-trans-octaprenyl)benzoate + diphosphate. The protein operates within cofactor biosynthesis; ubiquinone biosynthesis. Catalyzes the prenylation of para-hydroxybenzoate (PHB) with an all-trans polyprenyl group. Mediates the second step in the final reaction sequence of ubiquinone-8 (UQ-8) biosynthesis, which is the condensation of the polyisoprenoid side chain with PHB, generating the first membrane-bound Q intermediate 3-octaprenyl-4-hydroxybenzoate. The protein is 4-hydroxybenzoate octaprenyltransferase of Shewanella sp. (strain ANA-3).